The sequence spans 72 residues: Large ribosomal subunit protein bL31c (72 aa).

This sequence belongs to the bacterial ribosomal protein bL31 family. Type A subfamily. Part of the 50S ribosomal subunit.

The protein localises to the plastid. It is found in the chloroplast. Its function is as follows. Binds the 23S rRNA. The sequence is that of Large ribosomal subunit protein bL31c (rpl31) from Thalassiosira pseudonana (Marine diatom).